The chain runs to 370 residues: Cyanuric acid amidohydrolase (370 aa).

The tract at residues 1-106 (MRTTSVGVFK…TVFTRREVER (106 aa)) is RU A. Substrate-binding positions include arginine 54 and 85-86 (SG). The interval 115–251 (RLSIGMAHTR…NVVIVLGNSA (137 aa)) is RU B. The active site involves lysine 165. Substrate contacts are provided by residues arginine 197 and 234-235 (SA). Serine 234 acts as the Nucleophile in catalysis. The interval 257–370 (FEIGHAVMND…PVAVIARLSD (114 aa)) is RU C. Glutamate 302 is a binding site for Mg(2+). Residues arginine 329 and 348-349 (SG) contribute to the substrate site. Residues alanine 351, glutamine 354, glycine 355, proline 356, and glycine 359 each coordinate Mg(2+).

Belongs to the cyclic amide hydrolase (CyAH) family. Homotetramer.

It carries out the reaction cyanurate + H2O = 1-carboxybiuret + H(+). It participates in xenobiotic degradation; atrazine degradation; biuret from cyanurate: step 1/1. With respect to regulation, inhibited by barbituric acid. In terms of biological role, responsible for the hydrolysis of cyanuric acid, an intermediate formed during catabolism of s-triazine based compounds in herbicides such as atrazine and polymers such as melamine. Catalyzes the hydrolytic opening of the s-triazine ring of cyanuric acid (2,4,6-trihydroxy-s-triazine) to yield carbon dioxide and carboxybiuret, which spontaneously decarboxylates to biuret. This Bradyrhizobium diazoefficiens (strain JCM 10833 / BCRC 13528 / IAM 13628 / NBRC 14792 / USDA 110) protein is Cyanuric acid amidohydrolase.